A 435-amino-acid polypeptide reads, in one-letter code: MKRRASDRGAGETSARAKALGSGISGNNAKRAGPFILGPRLGNSPVPSIVQCLARKDGTDDFYQLKILTLEERGDQGIESQEERQGKMLLHTEYSLLSLLHTQDGVVHHHGLFQDRTCEIVEDTESSRMVKKMKKRICLVLDCLCAHDFSDKTADLINLQHYVIKEKRLSERETVVIFYDVVRVVEALHQKNIVHRDLKLGNMVLNKRTHRITITNFCLGKHPVSEGDLLKDQRGSPAYISPDVLSGRPYRGKPSDMWALGVVLFTMLYGQFPFYDSIPQELFRKIKAAEYTIPEDGRVSENTVCLIRKLLVLDPQQRLAAADVLEALSAIIASWQSLSSLSGPLQVVPDIDDQMSNADSSQEAKVTEECSQYEFENYMRQQLLLAEEKSSIHDARSWVPKRQFGSAPPVRRLGHDAQPMTSLDTAILAQRYLRK.

A compositionally biased stretch (basic and acidic residues) spans 1-10 (MKRRASDRGA). A disordered region spans residues 1–25 (MKRRASDRGAGETSARAKALGSGIS). Residues 35–332 (FILGPRLGNS…DVLEALSAII (298 aa)) enclose the Protein kinase domain. ATP contacts are provided by residues 41–49 (LGNSPVPSI) and lysine 66. Aspartate 197 acts as the Proton acceptor in catalysis.

This sequence belongs to the protein kinase superfamily. CAMK Ser/Thr protein kinase family.

It is found in the nucleus. The protein localises to the cytoplasm. The catalysed reaction is L-seryl-[protein] + ATP = O-phospho-L-seryl-[protein] + ADP + H(+). It carries out the reaction L-threonyl-[protein] + ATP = O-phospho-L-threonyl-[protein] + ADP + H(+). May be a negative regulator of NF-kappa-B and p53-mediated gene transcription. The sequence is that of Serine/threonine-protein kinase 40 (STK40) from Pongo abelii (Sumatran orangutan).